Here is a 507-residue protein sequence, read N- to C-terminus: Glucose-6-phosphate isomerase (507 aa).

Glu338 serves as the catalytic Proton donor. Residues His369 and Lys479 contribute to the active site.

The protein belongs to the GPI family.

Its subcellular location is the cytoplasm. The enzyme catalyses alpha-D-glucose 6-phosphate = beta-D-fructose 6-phosphate. The protein operates within carbohydrate biosynthesis; gluconeogenesis. It participates in carbohydrate degradation; glycolysis; D-glyceraldehyde 3-phosphate and glycerone phosphate from D-glucose: step 2/4. In terms of biological role, provides a gateway for fructose into the Entner-Doudouroff pathway. Catalyzes the reversible isomerization of glucose-6-phosphate to fructose-6-phosphate. This chain is Glucose-6-phosphate isomerase, found in Zymomonas mobilis subsp. mobilis (strain ATCC 31821 / ZM4 / CP4).